Reading from the N-terminus, the 257-residue chain is Thiazole synthase (257 aa).

The active-site Schiff-base intermediate with DXP is lysine 98. Residues glycine 159, 185–186 (AG), and 207–208 (NT) contribute to the 1-deoxy-D-xylulose 5-phosphate site.

Belongs to the ThiG family. In terms of assembly, homotetramer. Forms heterodimers with either ThiH or ThiS.

The protein resides in the cytoplasm. The catalysed reaction is [ThiS sulfur-carrier protein]-C-terminal-Gly-aminoethanethioate + 2-iminoacetate + 1-deoxy-D-xylulose 5-phosphate = [ThiS sulfur-carrier protein]-C-terminal Gly-Gly + 2-[(2R,5Z)-2-carboxy-4-methylthiazol-5(2H)-ylidene]ethyl phosphate + 2 H2O + H(+). The protein operates within cofactor biosynthesis; thiamine diphosphate biosynthesis. Catalyzes the rearrangement of 1-deoxy-D-xylulose 5-phosphate (DXP) to produce the thiazole phosphate moiety of thiamine. Sulfur is provided by the thiocarboxylate moiety of the carrier protein ThiS. In vitro, sulfur can be provided by H(2)S. The polypeptide is Thiazole synthase (Anaeromyxobacter dehalogenans (strain 2CP-1 / ATCC BAA-258)).